The chain runs to 364 residues: 3-dehydroquinate synthase (364 aa).

NAD(+) contacts are provided by residues 71-76 (DGEQYK), 105-109 (GVIGD), 129-130 (TT), K142, K151, and 169-172 (CLKT). Positions 184, 247, and 264 each coordinate Zn(2+).

This sequence belongs to the sugar phosphate cyclases superfamily. Dehydroquinate synthase family. The cofactor is Co(2+). Zn(2+) serves as cofactor. It depends on NAD(+) as a cofactor.

The protein resides in the cytoplasm. The catalysed reaction is 7-phospho-2-dehydro-3-deoxy-D-arabino-heptonate = 3-dehydroquinate + phosphate. It functions in the pathway metabolic intermediate biosynthesis; chorismate biosynthesis; chorismate from D-erythrose 4-phosphate and phosphoenolpyruvate: step 2/7. Its function is as follows. Catalyzes the conversion of 3-deoxy-D-arabino-heptulosonate 7-phosphate (DAHP) to dehydroquinate (DHQ). The sequence is that of 3-dehydroquinate synthase from Klebsiella pneumoniae (strain 342).